The primary structure comprises 436 residues: Homeobox protein PKNOX1 (436 aa).

A disordered region spans residues 23 to 50 (ELKTEQDPNCSDPDAEGVSPPPIESQTP). Phosphoserine occurs at positions 33 and 41. The region spanning 80-163 (GSEGTTSASF…MNSETLLSGE (84 aa)) is the MEIS N-terminal domain. Positions 259–321 (SKNKRGVLPK…NARRRILQPM (63 aa)) form a DNA-binding region, homeobox; TALE-type. The tract at residues 401 to 436 (AGQSEDESVDSTEDEGGALAPTHISGLVLENSDSLQ) is disordered. The segment covering 404-416 (SEDESVDSTEDEG) has biased composition (acidic residues).

It belongs to the TALE/MEIS homeobox family. Interacts with MN1.

The protein resides in the nucleus. Activates transcription in the presence of PBX1A and HOXA1. Its function is as follows. (Microbial infection) In complex with PBX1, binds to the 5'-TGATTGAC-3' consensus sequence in the U5 region of Moloney murine leukemia virus and promotes viral transcription. The protein is Homeobox protein PKNOX1 of Mus musculus (Mouse).